Here is a 222-residue protein sequence, read N- to C-terminus: N-(5'-phosphoribosyl)anthranilate isomerase (222 aa).

The protein belongs to the TrpF family.

The catalysed reaction is N-(5-phospho-beta-D-ribosyl)anthranilate = 1-(2-carboxyphenylamino)-1-deoxy-D-ribulose 5-phosphate. The protein operates within amino-acid biosynthesis; L-tryptophan biosynthesis; L-tryptophan from chorismate: step 3/5. This Symbiobacterium thermophilum (strain DSM 24528 / JCM 14929 / IAM 14863 / T) protein is N-(5'-phosphoribosyl)anthranilate isomerase.